The chain runs to 431 residues: Glutamate-1-semialdehyde 2,1-aminomutase (431 aa).

Lys267 bears the N6-(pyridoxal phosphate)lysine mark.

This sequence belongs to the class-III pyridoxal-phosphate-dependent aminotransferase family. HemL subfamily. In terms of assembly, homodimer. Pyridoxal 5'-phosphate serves as cofactor.

The protein resides in the cytoplasm. It catalyses the reaction (S)-4-amino-5-oxopentanoate = 5-aminolevulinate. The protein operates within porphyrin-containing compound metabolism; protoporphyrin-IX biosynthesis; 5-aminolevulinate from L-glutamyl-tRNA(Glu): step 2/2. The sequence is that of Glutamate-1-semialdehyde 2,1-aminomutase from Syntrophomonas wolfei subsp. wolfei (strain DSM 2245B / Goettingen).